We begin with the raw amino-acid sequence, 121 residues long: Fluoride-specific ion channel FluC 2 (121 aa).

4 helical membrane-spanning segments follow: residues 3-23 (YLFVFIGGLFGALLRYVLSTL), 27-47 (SGLPLGTLIANIVGAFLMGYL), 64-84 (GVTTGLLGALTTFSTFQFELV), and 92-112 (IALLFIYGLTSYIGGILFCWF). Na(+)-binding residues include G71 and T74.

It belongs to the fluoride channel Fluc/FEX (TC 1.A.43) family.

The protein resides in the cell membrane. It carries out the reaction fluoride(in) = fluoride(out). With respect to regulation, na(+) is not transported, but it plays an essential structural role and its presence is essential for fluoride channel function. Its function is as follows. Fluoride-specific ion channel. Important for reducing fluoride concentration in the cell, thus reducing its toxicity. The chain is Fluoride-specific ion channel FluC 2 from Staphylococcus haemolyticus (strain JCSC1435).